Reading from the N-terminus, the 159-residue chain is MTLEEVRGQDTVPESTARMQGAGKALHELLLSAQRQGCLTAGVYESAKVLNVDPDNVTFCVLAADEEDEGDIALQIHFTLIQAFCCENDIDIVRVGDVQRLAAIVGADDEGGAPGDLHCILISNPNEDTWKDPALEKLSLFCEESRSFNDWVPSITLPE.

Residues 43–86 are homodimerization; the sequence is VYESAKVLNVDPDNVTFCVLAADEEDEGDIALQIHFTLIQAFCC.

It belongs to the GADD45 family. In terms of assembly, undergoes concentration-dependent homodimerization, which is required for growth inhibititory activity and enhances interaction with PCNA. Interacts with GADD45GIP1. Interacts with PCNA.

Its function is as follows. Involved in the regulation of growth and apoptosis. Mediates activation of stress-responsive MTK1/MEKK4 MAPKKK. The chain is Growth arrest and DNA damage-inducible protein GADD45 gamma (Gadd45g) from Rattus norvegicus (Rat).